A 433-amino-acid chain; its full sequence is Histidinol dehydrogenase (433 aa).

Residues Y133, Q194, and N217 each contribute to the NAD(+) site. Residues S240, Q262, and H265 each contribute to the substrate site. Zn(2+)-binding residues include Q262 and H265. Catalysis depends on proton acceptor residues E330 and H331. Substrate contacts are provided by H331, D364, E418, and H423. Residue D364 coordinates Zn(2+). Residue H423 coordinates Zn(2+).

Belongs to the histidinol dehydrogenase family. Zn(2+) serves as cofactor.

It catalyses the reaction L-histidinol + 2 NAD(+) + H2O = L-histidine + 2 NADH + 3 H(+). Its pathway is amino-acid biosynthesis; L-histidine biosynthesis; L-histidine from 5-phospho-alpha-D-ribose 1-diphosphate: step 9/9. Catalyzes the sequential NAD-dependent oxidations of L-histidinol to L-histidinaldehyde and then to L-histidine. This Dechloromonas aromatica (strain RCB) protein is Histidinol dehydrogenase.